Here is a 143-residue protein sequence, read N- to C-terminus: Large ribosomal subunit protein bL17 (143 aa).

Belongs to the bacterial ribosomal protein bL17 family. Part of the 50S ribosomal subunit. Contacts protein L32.

In Chelativorans sp. (strain BNC1), this protein is Large ribosomal subunit protein bL17.